A 98-amino-acid polypeptide reads, in one-letter code: Cell division protein FtsB (98 aa).

Residues 1–3 (MKR) are Cytoplasmic-facing. The chain crosses the membrane as a helical span at residues 4–21 (LLIVLIALLAMLEYRLWF). Residues 22 to 98 (GDKSLAESFH…GGERDKPSND (77 aa)) lie on the Periplasmic side of the membrane. Positions 31–74 (HLQEQIKLQQQSNAQLVARNQILREEISDLRSGTEALEERARNE) form a coiled coil.

Belongs to the FtsB family. As to quaternary structure, part of a complex composed of FtsB, FtsL and FtsQ.

Its subcellular location is the cell inner membrane. In terms of biological role, essential cell division protein. May link together the upstream cell division proteins, which are predominantly cytoplasmic, with the downstream cell division proteins, which are predominantly periplasmic. This is Cell division protein FtsB from Shewanella halifaxensis (strain HAW-EB4).